The primary structure comprises 170 residues: ATP synthase subunit b (170 aa).

A helical transmembrane segment spans residues 22–44 (IINLAVVVFGLYKFLPGFLGKIL).

The protein belongs to the ATPase B chain family. In terms of assembly, F-type ATPases have 2 components, F(1) - the catalytic core - and F(0) - the membrane proton channel. F(1) has five subunits: alpha(3), beta(3), gamma(1), delta(1), epsilon(1). F(0) has four main subunits: a(1), b(1), b'(1) and c(10-14). The alpha and beta chains form an alternating ring which encloses part of the gamma chain. F(1) is attached to F(0) by a central stalk formed by the gamma and epsilon chains, while a peripheral stalk is formed by the delta, b and b' chains.

The protein resides in the cellular thylakoid membrane. In terms of biological role, f(1)F(0) ATP synthase produces ATP from ADP in the presence of a proton or sodium gradient. F-type ATPases consist of two structural domains, F(1) containing the extramembraneous catalytic core and F(0) containing the membrane proton channel, linked together by a central stalk and a peripheral stalk. During catalysis, ATP synthesis in the catalytic domain of F(1) is coupled via a rotary mechanism of the central stalk subunits to proton translocation. Functionally, component of the F(0) channel, it forms part of the peripheral stalk, linking F(1) to F(0). The protein is ATP synthase subunit b of Prochlorococcus marinus (strain NATL1A).